The sequence spans 324 residues: Phospho-N-acetylmuramoyl-pentapeptide-transferase (324 aa).

The next 10 helical transmembrane spans lie at 5–25 (VILF…PILI), 50–70 (GTPT…TIVM), 77–97 (ISPE…LGFL), 117–137 (LIGQ…YNFA), 147–167 (LSFD…VGGS), 176–196 (LDGL…ILAW), 203–223 (VAIF…FNAH), 227–247 (VFMG…IAIL), 250–270 (LEIL…SVIL), and 302–322 (VVVT…YIEV).

It belongs to the glycosyltransferase 4 family. MraY subfamily. Mg(2+) serves as cofactor.

The protein resides in the cell membrane. The catalysed reaction is UDP-N-acetyl-alpha-D-muramoyl-L-alanyl-gamma-D-glutamyl-meso-2,6-diaminopimeloyl-D-alanyl-D-alanine + di-trans,octa-cis-undecaprenyl phosphate = di-trans,octa-cis-undecaprenyl diphospho-N-acetyl-alpha-D-muramoyl-L-alanyl-D-glutamyl-meso-2,6-diaminopimeloyl-D-alanyl-D-alanine + UMP. It participates in cell wall biogenesis; peptidoglycan biosynthesis. Catalyzes the initial step of the lipid cycle reactions in the biosynthesis of the cell wall peptidoglycan: transfers peptidoglycan precursor phospho-MurNAc-pentapeptide from UDP-MurNAc-pentapeptide onto the lipid carrier undecaprenyl phosphate, yielding undecaprenyl-pyrophosphoryl-MurNAc-pentapeptide, known as lipid I. This chain is Phospho-N-acetylmuramoyl-pentapeptide-transferase, found in Bacillus subtilis (strain 168).